The primary structure comprises 115 residues: Pro-FMRFamide-related neuropeptide FF (115 aa).

The first 22 residues, 1 to 22, serve as a signal peptide directing secretion; the sequence is MDARQAAALLLVLLLVTDWSHA. 2 disordered regions span residues 20–51 and 78–102; these read SHAEGPGGRDGGDQIFMEEDSGAHPAQDAQTP and FGRNTRGSWSNKRLSPRAGEGLSSP. Positions 23–66 are excised as a propeptide; that stretch reads EGPGGRDGGDQIFMEEDSGAHPAQDAQTPRSLLRSLLQAMQRPG. Phe78 bears the Phenylalanine amide mark. Positions 81–94 are excised as a propeptide; it reads NTRGSWSNKRLSPR. Phenylalanine amide is present on Phe112.

This sequence belongs to the FARP (FMRFamide related peptide) family.

It localises to the secreted. In terms of biological role, morphine modulating peptides. Have wide-ranging physiologic effects, including the modulation of morphine-induced analgesia, elevation of arterial blood pressure, and increased somatostatin secretion from the pancreas. The neuropeptide FF potentiates and sensitizes ASIC3 cation channel. The chain is Pro-FMRFamide-related neuropeptide FF (NPFF) from Bos taurus (Bovine).